The primary structure comprises 552 residues: Hydroxylamine reductase (552 aa).

[2Fe-2S] cluster is bound by residues C5, C8, C20, and C27. Residues H251, E275, C319, C407, C435, C460, E494, and K496 each contribute to the hybrid [4Fe-2O-2S] cluster site. The residue at position 407 (C407) is a Cysteine persulfide.

This sequence belongs to the HCP family. The cofactor is [2Fe-2S] cluster. It depends on hybrid [4Fe-2O-2S] cluster as a cofactor.

It is found in the cytoplasm. The enzyme catalyses A + NH4(+) + H2O = hydroxylamine + AH2 + H(+). In terms of biological role, catalyzes the reduction of hydroxylamine to form NH(3) and H(2)O. The protein is Hydroxylamine reductase of Shigella flexneri.